The primary structure comprises 547 residues: MSAKEVKFGVDARDRMMRGVDILANAVKVTLGPKGRNVVLDKSFGAPRITKDGVTVAKEIELDDKFENMGAQMVREVASKSADAAGDGTTTATVLAQAIVREGGKAVAAGMNPMDLKRGIDLAVEAVVADLVKNSKKVTSNEEIAQVGTISANGDVEIGKFLSDAMKKVGNEGVITVEEAKSLETELDVVEGMQFDRGYISPYFVTNADKMRVEFDDAYILINEKKLSNLNELLPLLEAVVQTGKPLVIVAEDVEGEALATLVVNRLRGGLKVAAVKAPGFGDRRKAMLQDIAILTGGQAISEDLGIKMENVTLQMLGKAKKVMIDKENTTIVNGAGKKADIEARVAQIKAQIEETTSDYDREKLQERLAKLAGGVAVIRVGGATEIEVKERKDRVDDAMHATRAAVEEGIVPGGGVALLRASEQLKRIKTQNDDQKTGVEIVRKALSAPARQIAINAGEDGSVIVGKVLEKDQYNYGFDSQTGEYGDLVKKGIIDPTKVVRTAIQNAASVAALLITTEAMVAELPKKGGAAGGMPPGGGGMGGMDF.

Residues 30–33 (TLGP), Lys-51, 87–91 (DGTTT), Gly-415, and Asp-496 each bind ATP.

Belongs to the chaperonin (HSP60) family. As to quaternary structure, forms a cylinder of 14 subunits composed of two heptameric rings stacked back-to-back. Interacts with the co-chaperonin GroES.

The protein localises to the cytoplasm. The catalysed reaction is ATP + H2O + a folded polypeptide = ADP + phosphate + an unfolded polypeptide.. Its function is as follows. Together with its co-chaperonin GroES, plays an essential role in assisting protein folding. The GroEL-GroES system forms a nano-cage that allows encapsulation of the non-native substrate proteins and provides a physical environment optimized to promote and accelerate protein folding. The sequence is that of Chaperonin GroEL 1 from Rhodopseudomonas palustris (strain BisB5).